The sequence spans 549 residues: Cytoplasmic trehalase (549 aa).

Residues R168, W175–D176, N212, R221–Q223, R292–E294, and G324 each bind substrate. Active-site proton donor/acceptor residues include D326 and E509. Position 525 (E525) interacts with substrate.

It belongs to the glycosyl hydrolase 37 family. As to quaternary structure, monomer.

The protein resides in the cytoplasm. It carries out the reaction alpha,alpha-trehalose + H2O = alpha-D-glucose + beta-D-glucose. It functions in the pathway glycan degradation; trehalose degradation; D-glucose from alpha,alpha-trehalose: step 1/1. Functionally, hydrolyzes trehalose to glucose. Could be involved, in cells returning to low osmolarity conditions, in the utilization of the accumulated cytoplasmic trehalose, which was synthesized in response to high osmolarity. This is Cytoplasmic trehalase from Salmonella arizonae (strain ATCC BAA-731 / CDC346-86 / RSK2980).